A 388-amino-acid chain; its full sequence is Formate-dependent phosphoribosylglycinamide formyltransferase (388 aa).

N(1)-(5-phospho-beta-D-ribosyl)glycinamide contacts are provided by residues 20–21 and Glu80; that span reads EL. ATP-binding positions include Arg112, Lys153, 158-163, 193-196, and Glu201; these read SSGKGQ and EEFI. The 190-residue stretch at 117–306 folds into the ATP-grasp domain; that stretch reads RLAFEKLGLR…EFEIHARAIL (190 aa). Residues Glu265 and Glu277 each contribute to the Mg(2+) site. N(1)-(5-phospho-beta-D-ribosyl)glycinamide contacts are provided by residues Asp284, Lys352, and 359-360; that span reads RR.

This sequence belongs to the PurK/PurT family. Homodimer.

The enzyme catalyses N(1)-(5-phospho-beta-D-ribosyl)glycinamide + formate + ATP = N(2)-formyl-N(1)-(5-phospho-beta-D-ribosyl)glycinamide + ADP + phosphate + H(+). It participates in purine metabolism; IMP biosynthesis via de novo pathway; N(2)-formyl-N(1)-(5-phospho-D-ribosyl)glycinamide from N(1)-(5-phospho-D-ribosyl)glycinamide (formate route): step 1/1. Its function is as follows. Involved in the de novo purine biosynthesis. Catalyzes the transfer of formate to 5-phospho-ribosyl-glycinamide (GAR), producing 5-phospho-ribosyl-N-formylglycinamide (FGAR). Formate is provided by PurU via hydrolysis of 10-formyl-tetrahydrofolate. The chain is Formate-dependent phosphoribosylglycinamide formyltransferase from Methanococcus maripaludis (strain C5 / ATCC BAA-1333).